We begin with the raw amino-acid sequence, 1187 residues long: MYSHFKIHIGNELPNTINNYNNNNNSQHNDKMNLSKIKNNQDIPTSNTNISPKPISQQKRRKVEKGGVECKPIVPSTSSTSTLIPTPPPKLPQQQQELQHHSKPSSSSSSSSSSLSSSSTSIPNSPTPIFPVFLIPTQNMDLTCSYSNSQNYVESNINNNINNNINNNNNNNANNIQYINSNTYSGGCISRSSSSSSSSSSSSSGKSNENSIHLNSINNDNNNYYNKVLCYLNQLEDDQRKQYLFQQTQPPQPYPQQIQPPQEQLQQHQSQAPHSPLPQPQPPSQLQTQSIFQISPIPQNNSTQQILIQQTQIHITSTPNQTPISTPQQLGNQQFQFYQASKSTIIEKNNINIQINKNNNSGEFSTNSETNISSSNENINSNNNTKIDNNSNTSNGFNSNSNNNNNNNNNNNSNSVQLNYIEYDGINLNNQIFMNSDFNNEFFPNNTDENYPSDHNSNDNNNDKNNNTNNNIIINDDNNNNPNNNNINNNNSIEIIDEQKHQLQLQELQLQQEQQQEQQQEQLQQCHIEIIKNNSQFPFTPNTTESGFSSTSTTPSSTSVPSSLSNSSSAIPPPSSNYLDCSEPINNLESFNYNNSNTNTNNINNNNNNNNNNNNNNNNNNNNNNNNNNNNIENINIKNSNSNINSGYKSNINCSSPNRTVPNSPISNYSSMSSSSSPNSFTSSTSSLNISCSPNSDPLTPIVPTTPTLIEQTFQIQQPSFENIKNNTQISPSSHDGDTISEVIINHINNNSINNNNNNDKNNDIDNSNENLTTTTTTTTTTTTTTTTNNNKKKINNYKINNYNNNIDNNNHELNDDDNDDDDDDDVDDNDDNNNNNKSIYKKKEIKKREIRDELERKNEPKRRELIKKFIESKDSKFKKLTTDELLIMSPKVFGKISRYNMFEVFFGNEEVCGGNIKVSDTIKYRDQLEQILKKVWSTNEYWRCPLCEDIIISQKSFSQPHENRFSNKSCLKYHLLRLHFADVKSTIVKKRKIESRDMSSDPRYRKCKHDDCHSWITSKHMCDHIIIDHHIDDPQKSKTCGKCNELKKKLKKDFFNNINHYYESNKLSDLKIEYNNNHNNNINTNNNNNNNNNNNNNNNNNNNNNNNNNNNNNNNNNNNNNINNNNTNNNFKTIITTTTTSTTTPSNNIDDDNNKNNNNNNNNNNNNNNNNTNPIPNLPMPKNLQK.

Polar residues predominate over residues 38–57; the sequence is KNNQDIPTSNTNISPKPISQ. Disordered stretches follow at residues 38 to 127, 189 to 215, 248 to 287, 358 to 415, 443 to 490, 536 to 689, 752 to 840, and 1079 to 1187; these read KNNQ…NSPT, ISRS…IHLN, TQPP…SQLQ, NNNS…NSNS, FPNN…INNN, QFPF…SSLN, SINN…NKSI, and HNNN…NLQK. Composition is skewed to low complexity over residues 71-84, 104-124, 190-215, and 248-274; these read KPIV…STLI, PSSS…SIPN, SRSS…IHLN, and TQPP…QAPH. Residues 443-455 are compositionally biased toward polar residues; that stretch reads FPNNTDENYPSDH. Low complexity-rich tracts occupy residues 458–490, 543–570, 585–653, 662–689, 752–790, and 797–809; these read NDNN…INNN, TTES…SSSA, INNL…SNIN, PNSP…SSLN, SINN…TTNN, and NYKI…NIDN. Residues 815–832 are compositionally biased toward acidic residues; that stretch reads NDDDNDDDDDDDVDDNDD. Composition is skewed to low complexity over residues 1079–1149 and 1156–1174; these read HNNN…PSNN and KNNN…NNTN.

This is an uncharacterized protein from Dictyostelium discoideum (Social amoeba).